An 880-amino-acid chain; its full sequence is Protein translocase subunit SecA (880 aa).

ATP is bound by residues Q87, 105 to 109 (GEGKT), and D501. Zn(2+)-binding residues include C864, C866, C875, and H876.

Belongs to the SecA family. As to quaternary structure, monomer and homodimer. Part of the essential Sec protein translocation apparatus which comprises SecA, SecYEG and auxiliary proteins SecDF-YajC and YidC. Requires Zn(2+) as cofactor.

Its subcellular location is the cell inner membrane. The protein resides in the cytoplasm. The enzyme catalyses ATP + H2O + cellular proteinSide 1 = ADP + phosphate + cellular proteinSide 2.. Functionally, part of the Sec protein translocase complex. Interacts with the SecYEG preprotein conducting channel. Has a central role in coupling the hydrolysis of ATP to the transfer of proteins into and across the cell membrane, serving both as a receptor for the preprotein-SecB complex and as an ATP-driven molecular motor driving the stepwise translocation of polypeptide chains across the membrane. The polypeptide is Protein translocase subunit SecA (Orientia tsutsugamushi (strain Boryong) (Rickettsia tsutsugamushi)).